Consider the following 827-residue polypeptide: SID1 transmembrane family member 1 (827 aa).

An N-terminal signal peptide occupies residues 1 to 19 (MLDCLRLALLCALPWLLRA). Residues 20–309 (AVPGHQEEPL…SIKESVYVKS (290 aa)) lie on the Extracellular side of the membrane. N-linked (GlcNAc...) asparagine glycosylation is found at N67, N83, N136, and N282. Residues 310-330 (SLFSIFVFLSFYLGCLLVVLV) form a helical membrane-spanning segment. Topologically, residues 331 to 442 (HHVRFQRKSI…DRRIVSKKYK (112 aa)) are cytoplasmic. The tract at residues 344 to 409 (FGSSDGSGNM…VEESDFDTMP (66 aa)) is disordered. The span at 375-386 (SSSSPGRQMSSS) shows a compositional bias: low complexity. Acidic residues predominate over residues 398–409 (SSVEESDFDTMP). A helical membrane pass occupies residues 443–463 (IYFWNIITIAVFYALPVMQLV). At 464–494 (ITYQTVVNVTGNQDICYYNFLCAHPLGVLSA) the chain is on the extracellular side. An N-linked (GlcNAc...) asparagine glycan is attached at N471. A helical transmembrane segment spans residues 495-515 (FNNILSNLGHVLLGFLFLLIV). At 516-541 (LRRDLLHRRALEAKDIFAMEYGIPKH) the chain is on the cytoplasmic side. A helical transmembrane segment spans residues 542 to 562 (FGLFYAMGIALMMEGVLSACY). Over 563–572 (HVCPNYSNFQ) the chain is Extracellular. An N-linked (GlcNAc...) asparagine glycan is attached at N567. A helical membrane pass occupies residues 573–590 (FDTSFMYMIAGLCMLKLY). The Cytoplasmic portion of the chain corresponds to 591–600 (QTRHPDINAS). The chain crosses the membrane as a helical span at residues 601-621 (AYSAYASFAVVITLTVLGVVF). The Extracellular portion of the chain corresponds to 622–626 (GKNDV). Residues 627–647 (WFWIIFSAIHILSSLALSTQI) traverse the membrane as a helical segment. Residues 648-683 (YYMGRFKIDLGIFRRAAMVFYTDCIQQCSRPLYMDR) are Cytoplasmic-facing. The chain crosses the membrane as a helical span at residues 684 to 704 (MVLLIVGNLVNWSFAFFGLIY). The Extracellular segment spans residues 705–710 (RPRDFA). Residues 711–731 (SYMLGIFICNLLLYLAFYIIM) form a helical membrane-spanning segment. The Cytoplasmic segment spans residues 732–741 (KLRSSEKVLP). The helical transmembrane segment at 742-762 (LPVFCIAATAVVWAAALYFFF) threads the bilayer. The Extracellular segment spans residues 763–791 (QNLSSWEGTPAESREKNRECVLLDFFDDH). Residue N764 is glycosylated (N-linked (GlcNAc...) asparagine). A helical membrane pass occupies residues 792-812 (DIWHFLSATALFFSFLVLLTL). Residues 813-827 (DDDLDVVRRDQIPVF) are Cytoplasmic-facing.

It belongs to the SID1 family.

The protein resides in the membrane. Its function is as follows. In vitro binds long double-stranded RNA (dsRNA) (500 and 700 base pairs), but not dsRNA shorter than 300 bp. Not involved in RNA autophagy, a process in which RNA is directly imported into lysosomes in an ATP-dependent manner, and degraded. The chain is SID1 transmembrane family member 1 (Sidt1) from Mus musculus (Mouse).